The following is a 101-amino-acid chain: Urease subunit beta (101 aa).

It belongs to the urease beta subunit family. Heterotrimer of UreA (gamma), UreB (beta) and UreC (alpha) subunits. Three heterotrimers associate to form the active enzyme.

The protein resides in the cytoplasm. It carries out the reaction urea + 2 H2O + H(+) = hydrogencarbonate + 2 NH4(+). Its pathway is nitrogen metabolism; urea degradation; CO(2) and NH(3) from urea (urease route): step 1/1. The polypeptide is Urease subunit beta (Ruegeria sp. (strain TM1040) (Silicibacter sp.)).